Reading from the N-terminus, the 658-residue chain is DNA ligase (658 aa).

NAD(+) contacts are provided by residues 31–35 (DFEYD), 80–81 (SL), and Glu110. Catalysis depends on Lys112, which acts as the N6-AMP-lysine intermediate. NAD(+) is bound by residues Arg133, Glu167, Lys279, and Lys303. Zn(2+) contacts are provided by Cys397, Cys400, Cys415, and Cys420. One can recognise a BRCT domain in the interval 584 to 654 (DTASIYFQKS…KALNIPIINE (71 aa)).

It belongs to the NAD-dependent DNA ligase family. LigA subfamily. The cofactor is Mg(2+). It depends on Mn(2+) as a cofactor.

It carries out the reaction NAD(+) + (deoxyribonucleotide)n-3'-hydroxyl + 5'-phospho-(deoxyribonucleotide)m = (deoxyribonucleotide)n+m + AMP + beta-nicotinamide D-nucleotide.. DNA ligase that catalyzes the formation of phosphodiester linkages between 5'-phosphoryl and 3'-hydroxyl groups in double-stranded DNA using NAD as a coenzyme and as the energy source for the reaction. It is essential for DNA replication and repair of damaged DNA. In Mycoplasma pneumoniae (strain ATCC 29342 / M129 / Subtype 1) (Mycoplasmoides pneumoniae), this protein is DNA ligase.